The sequence spans 496 residues: Glutamyl-tRNA(Gln) amidotransferase subunit A (496 aa).

Residues lysine 75 and serine 150 each act as charge relay system in the active site. Serine 174 acts as the Acyl-ester intermediate in catalysis.

It belongs to the amidase family. GatA subfamily. In terms of assembly, heterotrimer of A, B and C subunits.

The catalysed reaction is L-glutamyl-tRNA(Gln) + L-glutamine + ATP + H2O = L-glutaminyl-tRNA(Gln) + L-glutamate + ADP + phosphate + H(+). Allows the formation of correctly charged Gln-tRNA(Gln) through the transamidation of misacylated Glu-tRNA(Gln) in organisms which lack glutaminyl-tRNA synthetase. The reaction takes place in the presence of glutamine and ATP through an activated gamma-phospho-Glu-tRNA(Gln). The sequence is that of Glutamyl-tRNA(Gln) amidotransferase subunit A from Burkholderia lata (strain ATCC 17760 / DSM 23089 / LMG 22485 / NCIMB 9086 / R18194 / 383).